An 894-amino-acid chain; its full sequence is DNA mismatch repair protein MutS (894 aa).

Position 632–639 (632–639) interacts with ATP; that stretch reads GPNMGGKS.

This sequence belongs to the DNA mismatch repair MutS family.

Functionally, this protein is involved in the repair of mismatches in DNA. It is possible that it carries out the mismatch recognition step. This protein has a weak ATPase activity. The chain is DNA mismatch repair protein MutS from Paraburkholderia xenovorans (strain LB400).